Reading from the N-terminus, the 509-residue chain is Erythropoietin receptor (509 aa).

Residues 1 to 24 (MYHFGATLWPGVGSLCLLLAGATW) form the signal peptide. Residues 25–251 (APSPNSPDAK…SLLTASDLDP (227 aa)) are Extracellular-facing. 2 disulfides stabilise this stretch: cysteine 52–cysteine 62 and cysteine 91–cysteine 107. In terms of domain architecture, Fibronectin type-III spans 148–248 (PPAGLLARRA…EPASLLTASD (101 aa)). The N-linked (GlcNAc...) asparagine glycan is linked to asparagine 184. The WSXWS motif motif lies at 234–238 (WSAWS). Residues 252–274 (LILTLSLILVLILLLLAVLALLS) form a helical membrane-spanning segment. Residues 275–509 (HRRTLKQKIW…PSPPNYVTCS (235 aa)) lie on the Cytoplasmic side of the membrane. Lysine 282 participates in a covalent cross-link: Glycyl lysine isopeptide (Lys-Gly) (interchain with G-Cter in ubiquitin). The Box 1 motif signature appears at 283–291 (IWPGIPSPE). Phosphotyrosine; by JAK2 occurs at positions 369 and 427. An ITIM motif motif is present at residues 453-458 (LKYLYL). Lysine 454 is covalently cross-linked (Glycyl lysine isopeptide (Lys-Gly) (interchain with G-Cter in ubiquitin)). Tyrosine 455, tyrosine 457, tyrosine 469, tyrosine 486, tyrosine 490, and tyrosine 505 each carry phosphotyrosine; by JAK2. Residues 467-509 (TDYSSGGSQETQGGSSSGPYSNPYENSLVPAPEPSPPNYVTCS) are disordered. The span at 470 to 493 (SSGGSQETQGGSSSGPYSNPYENS) shows a compositional bias: low complexity.

It belongs to the type I cytokine receptor family. Type 1 subfamily. In terms of assembly, forms homodimers on EPO stimulation. The tyrosine-phosphorylated form interacts with several SH2 domain-containing proteins including LYN, the adapter protein SH2B2, PTPN6, PTPN11, JAK2, PI3 kinases, STAT5A/B, SOCS3, CRKL. Interacts with INPP5D/SHIP1. SH2B2 binding inhibits the JAK-STAT signaling. Interacts with RHEX; this interaction occurs in a erythropoietin (EPO)-dependent manner. Interacts with ATXN2L. In terms of processing, on EPO stimulation, phosphorylated on C-terminal tyrosine residues by JAK2. The phosphotyrosine motifs are also recruitment sites for several SH2-containing proteins and adapter proteins which mediate cell proliferation. Phosphorylation on Tyr-455 is required for PTPN6 interaction, Tyr-427 for PTPN11. Tyr-427 is also required for SOCS3 binding, but Tyr-455/Tyr-457 motif is the preferred binding site. Ubiquitinated by the ECS(SOCS2) complex following ligand-binding and phosphorylation by JAK2, leading to its degradation by the proteasome. Regulation by the ECS(SOCS2) complex acts as a negative feedback loop of erythropoietin-mediated signaling pathway. Ubiquitination at Lys-282 mediates receptor internalization, whereas ubiquitination at Lys-454 promotes trafficking of activated receptors to the lysosomes for degradation. Ubiquitinated by NOSIP; appears to be either multi-monoubiquitinated or polyubiquitinated. Ubiquitination mediates proliferation and survival of EPO-dependent cells.

The protein localises to the cell membrane. In terms of biological role, receptor for erythropoietin, which mediates erythropoietin-induced erythroblast proliferation and differentiation. Upon EPO stimulation, EPOR dimerizes triggering the JAK2/STAT5 signaling cascade. In some cell types, can also activate STAT1 and STAT3. May also activate the LYN tyrosine kinase. Isoform EPOR-T acts as a dominant-negative receptor of EPOR-mediated signaling. The protein is Erythropoietin receptor (EPOR) of Sus scrofa (Pig).